We begin with the raw amino-acid sequence, 438 residues long: Enolase (438 aa).

The substrate site is built by His-159 and Glu-168. Glu-211 serves as the catalytic Proton donor. Positions 246, 297, and 322 each coordinate Mg(2+). Residues Glu-297 and Asp-322 each contribute to the substrate site. Lys-347 (proton acceptor) is an active-site residue. Substrate is bound by residues 374 to 377 (SHRS) and Lys-398.

Belongs to the enolase family. As to quaternary structure, homodimer. Mg(2+) is required as a cofactor.

The protein localises to the cytoplasm. The catalysed reaction is (2R)-2-phosphoglycerate = phosphoenolpyruvate + H2O. Its pathway is carbohydrate degradation; glycolysis; pyruvate from D-glyceraldehyde 3-phosphate: step 4/5. This chain is Enolase (enoA), found in Penicillium chrysogenum (Penicillium notatum).